The following is a 692-amino-acid chain: Protein adenylyltransferase SelO-1, mitochondrial (692 aa).

The transit peptide at methionine 1–leucine 24 directs the protein to the mitochondrion. Residues glycine 142, glycine 144, lysine 176, aspartate 188, glycine 189, arginine 246, and arginine 253 each contribute to the ATP site. Catalysis depends on aspartate 337, which acts as the Proton acceptor. The Mg(2+) site is built by asparagine 338 and aspartate 347. Aspartate 347 is an ATP binding site. The tract at residues leucine 637–aspartate 676 is disordered. Residue selenocysteine 690 is a non-standard amino acid, selenocysteine.

Belongs to the SELO family. Mg(2+) serves as cofactor.

It localises to the mitochondrion. It catalyses the reaction L-tyrosyl-[protein] + ATP = O-(5'-adenylyl)-L-tyrosyl-[protein] + diphosphate. It carries out the reaction L-threonyl-[protein] + ATP = 3-O-(5'-adenylyl)-L-threonyl-[protein] + diphosphate. The enzyme catalyses L-seryl-[protein] + ATP = 3-O-(5'-adenylyl)-L-seryl-[protein] + diphosphate. Its function is as follows. Catalyzes the transfer of adenosine 5'-monophosphate (AMP) to Ser, Thr and Tyr residues of target proteins (AMPylation). May be a redox-active mitochondrial selenoprotein which interacts with a redox target protein. This Danio rerio (Zebrafish) protein is Protein adenylyltransferase SelO-1, mitochondrial.